Reading from the N-terminus, the 3131-residue chain is Intermembrane lipid transfer protein vps1302 (3131 aa).

In terms of domain architecture, Chorein N-terminal spans 2–115 (LEGLLANFLN…VLESKRRQMQ (114 aa)). The segment covering 774 to 801 (DGKASDDDDNGDWRPESSESLDSHESEY) has biased composition (basic and acidic residues). Residues 774-807 (DGKASDDDDNGDWRPESSESLDSHESEYKLNNTP) form a disordered region. The region spanning 2085 to 2363 (KVMIYPPYVI…NYSWDFPILK (279 aa)) is the SHR-BD domain.

Belongs to the VPS13 family.

The protein resides in the golgi apparatus. It is found in the trans-Golgi network. Its function is as follows. Mediates the transfer of lipids between membranes at organelle contact sites. May play a role in mitochondrial lipid homeostasis, Golgi vesicle transport, reticulophagy, actin cytoskeleton organization and formation of the forespore membrane. The polypeptide is Intermembrane lipid transfer protein vps1302 (Schizosaccharomyces pombe (strain 972 / ATCC 24843) (Fission yeast)).